A 1006-amino-acid polypeptide reads, in one-letter code: E3 ubiquitin-protein ligase MIB1 (1006 aa).

The region spanning 6–74 (NNRVMVEGVG…AYDLRILDSA (69 aa)) is the MIB/HERC2 1 domain. The ZZ-type zinc-finger motif lies at 80 to 132 (HDGTMCDTCRQQPIIGIRWKCAECTNYDLCTVCYHGDKHHLRHRFYRITTPGS). Positions 85, 88, 100, 103, 109, 112, 118, and 122 each coordinate Zn(2+). The 79-residue stretch at 143–221 (SKKITARGIF…MSDLKCVQDA (79 aa)) folds into the MIB/HERC2 2 domain. S408 bears the Phosphoserine mark. 9 ANK repeats span residues 430 to 460 (DLNE…DVNG), 463 to 492 (AGHT…DVEA), 496 to 525 (DGDR…DLNA), 529 to 558 (RRQT…HPSL), 562 to 591 (EGDT…DVTI), 595 to 627 (NGFN…IVDE), 631 to 661 (DGYT…NLDI), 665 to 694 (NQQT…KLDI), and 698 to 729 (DGDT…KVDA). 2 consecutive RING-type zinc fingers follow at residues 819–854 (CMVC…LICK) and 866–901 (CVVC…VQCR). The stretch at 935-962 (QKDKDNTNVNADVQKLQQQLQDIKEQTM) forms a coiled coil. The RING-type 3 zinc finger occupies 963 to 996 (CPVCLDRLKNMIFLCGHGTCQLCGDRMSECPICR).

Interacts with CEP131 and PCM1. Post-translationally, ubiquitinated; possibly via autoubiquitination. Ubiquitinated; this modification is inhibited in response to cellular stress, such as ultraviolet light (UV) radiation or heat shock. In terms of tissue distribution, widely expressed at low level. Expressed at higher level in spinal cord, ovary, whole brain, and all specific brain regions examined.

It localises to the cytoplasm. The protein resides in the cytoskeleton. It is found in the microtubule organizing center. Its subcellular location is the centrosome. The protein localises to the centriolar satellite. It localises to the cell membrane. It catalyses the reaction S-ubiquitinyl-[E2 ubiquitin-conjugating enzyme]-L-cysteine + [acceptor protein]-L-lysine = [E2 ubiquitin-conjugating enzyme]-L-cysteine + N(6)-ubiquitinyl-[acceptor protein]-L-lysine.. The protein operates within protein modification; protein ubiquitination. Its function is as follows. E3 ubiquitin-protein ligase that mediates ubiquitination of Delta receptors, which act as ligands of Notch proteins. Positively regulates the Delta-mediated Notch signaling by ubiquitinating the intracellular domain of Delta, leading to endocytosis of Delta receptors. Probably mediates ubiquitination and subsequent proteasomal degradation of DAPK1, thereby antagonizing anti-apoptotic effects of DAPK1 to promote TNF-induced apoptosis. Involved in ubiquitination of centriolar satellite CEP131, CEP290 and PCM1 proteins and hence inhibits primary cilium formation in proliferating cells. Mediates 'Lys-63'-linked polyubiquitination of TBK1, which probably participates in kinase activation. (Microbial infection) During adenovirus infection, mediates ubiquitination of Core-capsid bridging protein. This allows viral genome delivery into nucleus for infection. The chain is E3 ubiquitin-protein ligase MIB1 (MIB1) from Homo sapiens (Human).